The chain runs to 311 residues: Pyrimidine-specific ribonucleoside hydrolase RihA (311 aa).

His-240 is a catalytic residue.

It belongs to the IUNH family. RihA subfamily.

Hydrolyzes cytidine or uridine to ribose and cytosine or uracil, respectively. The polypeptide is Pyrimidine-specific ribonucleoside hydrolase RihA (Klebsiella pneumoniae (strain 342)).